Reading from the N-terminus, the 433-residue chain is UPF0597 protein DNO_0106 (433 aa).

It belongs to the UPF0597 family.

The sequence is that of UPF0597 protein DNO_0106 from Dichelobacter nodosus (strain VCS1703A).